Reading from the N-terminus, the 294-residue chain is Endolytic peptidoglycan transglycosylase RlpA (294 aa).

The signal sequence occupies residues 1-23 (MKQKIFQILTALCCIFYVMSAQA). In terms of domain architecture, SPOR spans 216–291 (EKYTTVYKIR…NYSKPLIVYT (76 aa)).

It belongs to the RlpA family.

In terms of biological role, lytic transglycosylase with a strong preference for naked glycan strands that lack stem peptides. This Pasteurella multocida (strain Pm70) protein is Endolytic peptidoglycan transglycosylase RlpA.